The following is a 507-amino-acid chain: Putative histone deacetylase 2 (507 aa).

Residues 29 to 342 (RNVAYYYHKD…WALETGVILG (314 aa)) are histone deacetylase. Residue H162 is part of the active site. The segment at 444–507 (EECFVEEDSK…RKDLNIPGIP (64 aa)) is disordered. Residues 482–501 (SHSDVIEEAKYEDRDRRKDL) show a composition bias toward basic and acidic residues.

It belongs to the histone deacetylase family. HD type 1 subfamily. May be a component of a histone deacetylase complex containing saeg-2, saeg-1 and hda-2.

It localises to the nucleus. It catalyses the reaction N(6)-acetyl-L-lysyl-[histone] + H2O = L-lysyl-[histone] + acetate. In terms of biological role, probably responsible for the deacetylation of lysine residues on the N-terminal part of the core histones (H2A, H2B, H3 and H4). Histone deacetylation gives a tag for epigenetic repression and plays an important role in transcriptional regulation, cell cycle progression and developmental events. Histone deacetylases act via the formation of large multiprotein complexes. As a likely component of a histone deacetylase complex, together with saeg-1 and hda-2, functions downstream of the cAMP-dependent kinase egl-4 to regulate the expression of genes required for egg-laying and forgaging. This chain is Putative histone deacetylase 2 (hda-2), found in Caenorhabditis elegans.